Consider the following 463-residue polypeptide: Bifunctional protein HldE (463 aa).

The segment at Met-1–Ile-315 is ribokinase. Asn-191 to Glu-194 serves as a coordination point for ATP. Residue Asp-260 is part of the active site. The tract at residues Phe-334 to Asp-463 is cytidylyltransferase.

In the N-terminal section; belongs to the carbohydrate kinase PfkB family. This sequence in the C-terminal section; belongs to the cytidylyltransferase family. In terms of assembly, homodimer.

The enzyme catalyses D-glycero-beta-D-manno-heptose 7-phosphate + ATP = D-glycero-beta-D-manno-heptose 1,7-bisphosphate + ADP + H(+). The catalysed reaction is D-glycero-beta-D-manno-heptose 1-phosphate + ATP + H(+) = ADP-D-glycero-beta-D-manno-heptose + diphosphate. It functions in the pathway nucleotide-sugar biosynthesis; ADP-L-glycero-beta-D-manno-heptose biosynthesis; ADP-L-glycero-beta-D-manno-heptose from D-glycero-beta-D-manno-heptose 7-phosphate: step 1/4. The protein operates within nucleotide-sugar biosynthesis; ADP-L-glycero-beta-D-manno-heptose biosynthesis; ADP-L-glycero-beta-D-manno-heptose from D-glycero-beta-D-manno-heptose 7-phosphate: step 3/4. Functionally, catalyzes the phosphorylation of D-glycero-D-manno-heptose 7-phosphate at the C-1 position to selectively form D-glycero-beta-D-manno-heptose-1,7-bisphosphate. In terms of biological role, catalyzes the ADP transfer from ATP to D-glycero-beta-D-manno-heptose 1-phosphate, yielding ADP-D-glycero-beta-D-manno-heptose. This Helicobacter acinonychis (strain Sheeba) protein is Bifunctional protein HldE.